Reading from the N-terminus, the 4699-residue chain is Fat-like cadherin-related tumor suppressor homolog (4699 aa).

A signal peptide spans 1–38 (MFTMKIKKYVTPVKRKAFTILQWISLLCSLWLIPTVQS). The Extracellular portion of the chain corresponds to 39 to 4285 (KADEKHTATL…KNFSIEHISG (4247 aa)). Cadherin domains follow at residues 63-183 (SHSV…SPLF), 184-291 (YPTQ…APEI), 288-400 (APEI…IPIF), 401-507 (TQEI…DPIF), 508-613 (ENVN…RPQF), 614-716 (ERVN…SSIL), 773-877 (VNFP…RPVI), 878-980 (QKTL…APVF), 981-1088 (GVQE…APEF), 1089-1198 (DDFV…KPVY), 1194-1299 (DKPV…SPEF), 1300-1405 (DQRV…APLI), 1408-1506 (KTSE…PPQF), 1507-1612 (AKDV…HPEF), 1613-1717 (TAKI…PPKF), 1718-1815 (PTNN…IPYF), 1816-1932 (VQNE…PPVF), 1933-2033 (NERE…NFAF), 2034-2140 (QRES…CPLF), 2141-2241 (VNMP…MPVF), 2242-2341 (EKQF…YPEI), 2342-2449 (ESDI…APCF), 2450-2551 (VEPS…SPLF), 2552-2654 (DQST…VPYF), 2655-2763 (LLKE…IPTF), 2764-2860 (EKSS…YPKF), 2861-2967 (DNTF…APVF), 2968-3072 (KLPI…KPRY), 3068-3169 (LKPR…MPIF), 3170-3273 (SMAQ…PPEF), 3274-3378 (SMRQ…SPTF), 3379-3483 (LQNL…APIF), 3484-3588 (SSSN…PPIV), and 3589-3696 (TPLE…VIRF). Residues Asn-68 and Asn-159 are each glycosylated (N-linked (GlcNAc...) asparagine). Asn-367 carries N-linked (GlcNAc...) asparagine glycosylation. Residues Asn-782, Asn-846, and Asn-926 are each glycosylated (N-linked (GlcNAc...) asparagine). N-linked (GlcNAc...) asparagine glycans are attached at residues Asn-1109, Asn-1201, Asn-1315, Asn-1442, Asn-1476, and Asn-1514. 19 disulfide bridges follow: Cys-3807–Cys-3819, Cys-3814–Cys-3851, Cys-3853–Cys-3862, Cys-3869–Cys-3880, Cys-3874–Cys-3891, Cys-3893–Cys-3902, Cys-4071–Cys-4105, Cys-4117–Cys-4128, Cys-4122–Cys-4138, Cys-4140–Cys-4149, Cys-4156–Cys-4167, Cys-4161–Cys-4177, Cys-4179–Cys-4188, Cys-4194–Cys-4205, Cys-4199–Cys-4214, Cys-4216–Cys-4224, Cys-4231–Cys-4242, Cys-4236–Cys-4251, and Cys-4253–Cys-4262. One can recognise an EGF-like 1 domain in the interval 3865–3903 (TVNACSTDPCSPQRICMPSGSALGYQCVCPKGFSGTYCE). Residues 3921-4105 (AVSFGGKSYA…KRFTNVEFKC (185 aa)) enclose the Laminin G-like domain. 4 consecutive EGF-like domains span residues 4113-4150 (RLGI…KHCE), 4152-4189 (DLDP…KRCE), 4190-4225 (YGKF…PTCE), and 4227-4263 (DVDE…ASCG). The helical transmembrane segment at 4286 to 4306 (IISGVAVVLVIISCVLCCVVL) threads the bilayer. Over 4307 to 4699 (KRSSSSKRRN…EFLPQQQTNN (393 aa)) the chain is Cytoplasmic.

As to expression, localizes where basal actin filaments terminate.

It is found in the cell membrane. In terms of biological role, required for the planar polarity of actin filament orientation at the basal side of ovarian follicle cells. Required for proper egg chamber shape and elongation of the egg chamber during oogenesis. Required for the correct planar polarization of Rab10 within the basal follicle cell epithelium and is therefore indirectly involved in the Rab10-dependent remodeling of the basal membrane during egg chamber elongation. The polypeptide is Fat-like cadherin-related tumor suppressor homolog (kug) (Drosophila melanogaster (Fruit fly)).